The following is a 313-amino-acid chain: Porphobilinogen deaminase (313 aa).

Residue cysteine 242 is modified to S-(dipyrrolylmethanemethyl)cysteine.

This sequence belongs to the HMBS family. In terms of assembly, monomer. Requires dipyrromethane as cofactor.

The catalysed reaction is 4 porphobilinogen + H2O = hydroxymethylbilane + 4 NH4(+). Its pathway is porphyrin-containing compound metabolism; protoporphyrin-IX biosynthesis; coproporphyrinogen-III from 5-aminolevulinate: step 2/4. Tetrapolymerization of the monopyrrole PBG into the hydroxymethylbilane pre-uroporphyrinogen in several discrete steps. The polypeptide is Porphobilinogen deaminase (Pseudomonas paraeruginosa (strain DSM 24068 / PA7) (Pseudomonas aeruginosa (strain PA7))).